Consider the following 62-residue polypeptide: Conotoxin Pn-B0151 (62 aa).

The first 22 residues, 1–22 (MRCLPVFVILLLLIASTPSVDA), serve as a signal peptide directing secretion. The propeptide occupies 23–48 (LQKTKDDMPLASFHDNVKRILQTLSN).

The protein belongs to the conotoxin T superfamily. Contains 2 disulfide bonds that can be either 'C1-C3, C2-C4' or 'C1-C4, C2-C3', since these disulfide connectivities have been observed for conotoxins with cysteine framework V (for examples, see AC P0DQQ7 and AC P81755). Expressed by the venom duct.

The protein resides in the secreted. In Conus pennaceus (Feathered cone), this protein is Conotoxin Pn-B0151.